Reading from the N-terminus, the 603-residue chain is DNA mismatch repair protein MutL (603 aa).

The protein belongs to the DNA mismatch repair MutL/HexB family.

Functionally, this protein is involved in the repair of mismatches in DNA. It is required for dam-dependent methyl-directed DNA mismatch repair. May act as a 'molecular matchmaker', a protein that promotes the formation of a stable complex between two or more DNA-binding proteins in an ATP-dependent manner without itself being part of a final effector complex. The sequence is that of DNA mismatch repair protein MutL from Nitrobacter winogradskyi (strain ATCC 25391 / DSM 10237 / CIP 104748 / NCIMB 11846 / Nb-255).